Here is a 335-residue protein sequence, read N- to C-terminus: Holliday junction branch migration complex subunit RuvB (335 aa).

The segment at 4–184 is large ATPase domain (RuvB-L); sequence ADRIISGQAK…FGIVQRLEFY (181 aa). ATP-binding positions include isoleucine 23, arginine 24, glycine 65, lysine 68, threonine 69, threonine 70, 131-133, arginine 174, tyrosine 184, and arginine 221; that span reads EDY. Residue threonine 69 coordinates Mg(2+). The small ATPAse domain (RuvB-S) stretch occupies residues 185-255; it reads SVEDLTSIVA…VAKQALSMLD (71 aa). Positions 258–335 are head domain (RuvB-H); the sequence is DAGFDYLDRK…RHFGLQKLSD (78 aa). Residues arginine 294, arginine 313, and arginine 318 each contribute to the DNA site.

Belongs to the RuvB family. As to quaternary structure, homohexamer. Forms an RuvA(8)-RuvB(12)-Holliday junction (HJ) complex. HJ DNA is sandwiched between 2 RuvA tetramers; dsDNA enters through RuvA and exits via RuvB. An RuvB hexamer assembles on each DNA strand where it exits the tetramer. Each RuvB hexamer is contacted by two RuvA subunits (via domain III) on 2 adjacent RuvB subunits; this complex drives branch migration. In the full resolvosome a probable DNA-RuvA(4)-RuvB(12)-RuvC(2) complex forms which resolves the HJ.

The protein resides in the cytoplasm. It catalyses the reaction ATP + H2O = ADP + phosphate + H(+). Its function is as follows. The RuvA-RuvB-RuvC complex processes Holliday junction (HJ) DNA during genetic recombination and DNA repair, while the RuvA-RuvB complex plays an important role in the rescue of blocked DNA replication forks via replication fork reversal (RFR). RuvA specifically binds to HJ cruciform DNA, conferring on it an open structure. The RuvB hexamer acts as an ATP-dependent pump, pulling dsDNA into and through the RuvAB complex. RuvB forms 2 homohexamers on either side of HJ DNA bound by 1 or 2 RuvA tetramers; 4 subunits per hexamer contact DNA at a time. Coordinated motions by a converter formed by DNA-disengaged RuvB subunits stimulates ATP hydrolysis and nucleotide exchange. Immobilization of the converter enables RuvB to convert the ATP-contained energy into a lever motion, pulling 2 nucleotides of DNA out of the RuvA tetramer per ATP hydrolyzed, thus driving DNA branch migration. The RuvB motors rotate together with the DNA substrate, which together with the progressing nucleotide cycle form the mechanistic basis for DNA recombination by continuous HJ branch migration. Branch migration allows RuvC to scan DNA until it finds its consensus sequence, where it cleaves and resolves cruciform DNA. The polypeptide is Holliday junction branch migration complex subunit RuvB (Haemophilus influenzae (strain 86-028NP)).